The following is a 259-amino-acid chain: Small ribosomal subunit protein mS23 (259 aa).

Residues 230–244 show a composition bias toward polar residues; it reads RAASFTGSALPSSEE. The segment at 230 to 259 is disordered; sequence RAASFTGSALPSSEESAPVDEETEKVPQQV.

This sequence belongs to the mitochondrion-specific ribosomal protein mS23 family. Component of the mitochondrial small ribosomal subunit.

It is found in the mitochondrion. This is Small ribosomal subunit protein mS23 (rsm25) from Aspergillus terreus (strain NIH 2624 / FGSC A1156).